The following is a 399-amino-acid chain: Argininosuccinate synthase (399 aa).

ATP contacts are provided by residues 10–18 (AYSGGVDTS) and A38. Y89 contacts L-citrulline. Residue G119 participates in ATP binding. Residues T121, N125, and D126 each contribute to the L-aspartate site. Position 125 (N125) interacts with L-citrulline. L-citrulline is bound by residues R129, S177, S186, E262, and Y274.

The protein belongs to the argininosuccinate synthase family. Type 1 subfamily. Homotetramer.

Its subcellular location is the cytoplasm. It carries out the reaction L-citrulline + L-aspartate + ATP = 2-(N(omega)-L-arginino)succinate + AMP + diphosphate + H(+). It participates in amino-acid biosynthesis; L-arginine biosynthesis; L-arginine from L-ornithine and carbamoyl phosphate: step 2/3. The chain is Argininosuccinate synthase from Picosynechococcus sp. (strain ATCC 27264 / PCC 7002 / PR-6) (Agmenellum quadruplicatum).